The chain runs to 180 residues: MSTTIDNLDGGVEVGEVGEVGEETSLYFNSFNWKELKRENNRDNVEMWCNIHDGEEHTFEELASFYAVCIRDQFVEMKYNYRDLKLHKITFIAKSKYGLYDSLIPQHNHNHGNNLQQTFLFHSNGLENPYFEENIIKFSRESINLVRYYFEIYYGNSKYLKNWSILGDSDEYYCKMAKFK.

This is an uncharacterized protein from Dictyostelium discoideum (Social amoeba).